The following is a 477-amino-acid chain: Cysteine--tRNA ligase (477 aa).

Cysteine 29 contacts Zn(2+). The 'HIGH' region signature appears at 31 to 41 (PTVYDYPHLGH). Residues cysteine 209, histidine 234, and glutamate 238 each contribute to the Zn(2+) site. The 'KMSKS' region signature appears at 266–270 (KMSKS). ATP is bound at residue lysine 269.

This sequence belongs to the class-I aminoacyl-tRNA synthetase family. Zn(2+) serves as cofactor.

The protein localises to the cytoplasm. It catalyses the reaction tRNA(Cys) + L-cysteine + ATP = L-cysteinyl-tRNA(Cys) + AMP + diphosphate. The protein is Cysteine--tRNA ligase (cysS) of Pyrococcus abyssi (strain GE5 / Orsay).